We begin with the raw amino-acid sequence, 125 residues long: Ribosome-binding factor A (125 aa).

It belongs to the RbfA family. As to quaternary structure, monomer. Binds 30S ribosomal subunits, but not 50S ribosomal subunits or 70S ribosomes.

Its subcellular location is the cytoplasm. One of several proteins that assist in the late maturation steps of the functional core of the 30S ribosomal subunit. Associates with free 30S ribosomal subunits (but not with 30S subunits that are part of 70S ribosomes or polysomes). Required for efficient processing of 16S rRNA. May interact with the 5'-terminal helix region of 16S rRNA. This Methylobacillus flagellatus (strain ATCC 51484 / DSM 6875 / VKM B-1610 / KT) protein is Ribosome-binding factor A.